The primary structure comprises 968 residues: Chaperone protein ClpB3, chloroplastic (968 aa).

A chloroplast-targeting transit peptide spans 1–67 (MATATTTATA…RLDHRPFVVR (67 aa)). The region spanning 78–222 (TQQEFTEMAW…KSAIESIRGK (145 aa)) is the Clp R domain. Repeat stretches follow at residues 82 to 147 (FTEM…IQRQ) and 159 to 222 (LGRD…IRGK). The interval 237-485 (LEKYGKDLTA…KLKMEITSKP (249 aa)) is i. 282-289 (GEPGVGKT) is a binding site for ATP. Residues 488–606 (LDELDRSVIK…NEYLSSGKSM (119 aa)) are a coiled coil. The interval 611–802 (VLGSDIAEIV…VIIMTSNVGS (192 aa)) is II. 685–692 (GPTGVGKT) is a binding site for ATP.

It belongs to the ClpA/ClpB family.

The protein resides in the plastid. It localises to the chloroplast. Molecular chaperone essential for chloroplast development and seedling viability. Mediates internal thylakoid membrane formation and confers thermotolerance to chloroplasts during heat stress. In Arabidopsis thaliana (Mouse-ear cress), this protein is Chaperone protein ClpB3, chloroplastic (CLPB3).